The sequence spans 246 residues: Adenylate kinase 4 (246 aa).

Position 2 is an N-acetylalanine (Ala2). Position 43-48 (43-48 (GSGKGT)) interacts with ATP. The tract at residues 63–92 (STGDMLRAAVASKTPLGVKAKEAMEKGELV) is NMP. AMP-binding positions include Thr64, Arg69, 90 to 92 (ELV), 118 to 121 (GFPR), and Gln125. Residues 159–196 (GRWIHPSSGRSYHTKFAPPKTPGVDDITGEPLIQRKDD) are LID. Arg160 lines the ATP pocket. AMP-binding residues include Arg193 and Arg204.

It belongs to the adenylate kinase family. As to quaternary structure, monomer.

Its subcellular location is the cytoplasm. The catalysed reaction is AMP + ATP = 2 ADP. In terms of biological role, catalyzes the reversible transfer of the terminal phosphate group between ATP and AMP. Plays an important role in cellular energy homeostasis and in adenine nucleotide metabolism. This Arabidopsis thaliana (Mouse-ear cress) protein is Adenylate kinase 4 (ADK1).